A 180-amino-acid polypeptide reads, in one-letter code: Large ribosomal subunit protein uL6 (180 aa).

It belongs to the universal ribosomal protein uL6 family. As to quaternary structure, part of the 50S ribosomal subunit.

Functionally, this protein binds to the 23S rRNA, and is important in its secondary structure. It is located near the subunit interface in the base of the L7/L12 stalk, and near the tRNA binding site of the peptidyltransferase center. The protein is Large ribosomal subunit protein uL6 of Caldanaerobacter subterraneus subsp. tengcongensis (strain DSM 15242 / JCM 11007 / NBRC 100824 / MB4) (Thermoanaerobacter tengcongensis).